The following is a 930-amino-acid chain: Protocadherin gamma-A4 (930 aa).

The first 27 residues, 1–27, serve as a signal peptide directing secretion; that stretch reads MAAPYKSDRRGLIWICIFLGSLCDIRA. Cadherin domains are found at residues 28 to 132, 133 to 241, 242 to 346, 347 to 451, 452 to 561, and 569 to 682; these read EQIR…APSF, GAQQ…APVF, TQPE…APEV, TVTS…PPTF, THAS…TPEI, and DGST…APID. Over 28–691 the chain is Extracellular; it reads EQIRYSVPEE…DQEDSDITLY (664 aa). Residues Asn-418 and Asn-544 are each glycosylated (N-linked (GlcNAc...) asparagine). The chain crosses the membrane as a helical span at residues 692–712; that stretch reads LVVAVAAVSCVFLAFVIVLLI. Residues 713–930 are Cytoplasmic-facing; that stretch reads HRLRRWHSTR…KKKSGKKEKK (218 aa). Disordered regions lie at residues 803–839 and 900–930; these read SSLQ…WPNN and ATLT…KEKK. Positions 920–930 are enriched in basic residues; that stretch reads NKKKSGKKEKK.

It is found in the cell membrane. Potential calcium-dependent cell-adhesion protein. May be involved in the establishment and maintenance of specific neuronal connections in the brain. This Mus musculus (Mouse) protein is Protocadherin gamma-A4.